The sequence spans 161 residues: Phosphopantetheine adenylyltransferase (161 aa).

Thr10 is a substrate binding site. ATP is bound by residues Thr10–Phe11 and His18. Substrate-binding residues include Lys42, Met74, and Arg88. Residues Gly89 to Arg91, Glu99, and Trp124 to Ser130 each bind ATP.

This sequence belongs to the bacterial CoaD family. Homohexamer. It depends on Mg(2+) as a cofactor.

It is found in the cytoplasm. The enzyme catalyses (R)-4'-phosphopantetheine + ATP + H(+) = 3'-dephospho-CoA + diphosphate. Its pathway is cofactor biosynthesis; coenzyme A biosynthesis; CoA from (R)-pantothenate: step 4/5. Functionally, reversibly transfers an adenylyl group from ATP to 4'-phosphopantetheine, yielding dephospho-CoA (dPCoA) and pyrophosphate. The sequence is that of Phosphopantetheine adenylyltransferase from Edwardsiella ictaluri (strain 93-146).